The sequence spans 218 residues: 3-oxo-tetronate 4-phosphate decarboxylase (218 aa).

Catalysis depends on glutamate 86, which acts as the Proton acceptor. Zn(2+) contacts are provided by glutamate 86, histidine 105, and histidine 107. Tyrosine 132 serves as the catalytic Proton donor. Histidine 172 contacts Zn(2+).

Belongs to the aldolase class II family. AraD/FucA subfamily. The cofactor is Zn(2+).

The catalysed reaction is 3-dehydro-4-O-phospho-D-erythronate + H(+) = dihydroxyacetone phosphate + CO2. The enzyme catalyses 3-dehydro-4-O-phospho-L-erythronate + H(+) = dihydroxyacetone phosphate + CO2. In terms of biological role, catalyzes the decarboxylation of 3-oxo-tetronate 4-phosphate to dihydroxyacetone phosphate (DHAP) and CO(2). In Pectobacterium atrosepticum (strain SCRI 1043 / ATCC BAA-672) (Erwinia carotovora subsp. atroseptica), this protein is 3-oxo-tetronate 4-phosphate decarboxylase.